Here is a 213-residue protein sequence, read N- to C-terminus: ATP phosphoribosyltransferase (213 aa).

Belongs to the ATP phosphoribosyltransferase family. Short subfamily. As to quaternary structure, heteromultimer composed of HisG and HisZ subunits.

It is found in the cytoplasm. The catalysed reaction is 1-(5-phospho-beta-D-ribosyl)-ATP + diphosphate = 5-phospho-alpha-D-ribose 1-diphosphate + ATP. Its pathway is amino-acid biosynthesis; L-histidine biosynthesis; L-histidine from 5-phospho-alpha-D-ribose 1-diphosphate: step 1/9. Functionally, catalyzes the condensation of ATP and 5-phosphoribose 1-diphosphate to form N'-(5'-phosphoribosyl)-ATP (PR-ATP). Has a crucial role in the pathway because the rate of histidine biosynthesis seems to be controlled primarily by regulation of HisG enzymatic activity. The chain is ATP phosphoribosyltransferase from Listeria welshimeri serovar 6b (strain ATCC 35897 / DSM 20650 / CCUG 15529 / CIP 8149 / NCTC 11857 / SLCC 5334 / V8).